The sequence spans 650 residues: ATP-binding cassette sub-family G member 3 (650 aa).

Topologically, residues M1–T387 are cytoplasmic. The ABC transporter domain occupies L37–S279. Residues K381–V644 form the ABC transmembrane type-2 domain. A helical membrane pass occupies residues V388–L408. Topologically, residues K409–G420 are extracellular. Residues L421 to V441 form a helical membrane-spanning segment. The Cytoplasmic segment spans residues I442 to E469. A helical membrane pass occupies residues L470 to G490. The Extracellular portion of the chain corresponds to V491–F498. The helical transmembrane segment at F499–I519 threads the bilayer. Residues G520 to A527 lie on the Cytoplasmic side of the membrane. A helical transmembrane segment spans residues V528–L548. Residues Y549–H623 are Extracellular-facing. A helical membrane pass occupies residues L624–V644. At K645–R648 the chain is on the cytoplasmic side.

This sequence belongs to the ABC transporter superfamily. ABCG family. Eye pigment precursor importer (TC 3.A.1.204) subfamily. As to quaternary structure, may dimerize with another subunit to form a functional transporter. In terms of tissue distribution, highest levels of expression in thymus and spleen. Detected in lung and small intestine.

It localises to the membrane. In Mus musculus (Mouse), this protein is ATP-binding cassette sub-family G member 3 (Abcg3).